The following is a 759-amino-acid chain: Xaa-Pro dipeptidyl-peptidase (759 aa).

Active-site charge relay system residues include serine 347, aspartate 467, and histidine 497.

The protein belongs to the peptidase S15 family. As to quaternary structure, homodimer.

The protein localises to the secreted. The catalysed reaction is Hydrolyzes Xaa-Pro-|- bonds to release unblocked, N-terminal dipeptides from substrates including Ala-Pro-|-p-nitroanilide and (sequentially) Tyr-Pro-|-Phe-Pro-|-Gly-Pro-|-Ile.. In terms of biological role, removes N-terminal dipeptides sequentially from polypeptides having unsubstituted N-termini provided that the penultimate residue is proline. This is Xaa-Pro dipeptidyl-peptidase (pepX) from Streptococcus gordonii.